A 309-amino-acid polypeptide reads, in one-letter code: Syndecan-1 (309 aa).

The signal sequence occupies residues 1 to 22 (MRRAALWLWLCALALRLQPVLP). The Extracellular segment spans residues 23-253 (QIVTVNVPPE…GLLDRKEVLG (231 aa)). Disordered stretches follow at residues 28–57 (NVPP…DITL) and 145–185 (TTAQ…GGTS). The span at 32–42 (EDQDGSGDDSD) shows a compositional bias: acidic residues. Ser37 is a glycosylation site (O-linked (Xyl...) (chondroitin sulfate) serine). Asn43 carries an N-linked (GlcNAc...) asparagine glycan. Ser45 and Ser47 each carry an O-linked (Xyl...) (heparan sulfate) serine glycan. Residues 173–183 (GQPDQQPPSGG) show a composition bias toward low complexity. O-linked (Xyl...) (chondroitin sulfate) serine glycans are attached at residues Ser205 and Ser215. The chain crosses the membrane as a helical span at residues 254 to 274 (GVIAGGLVGLIFAVCLVGFML). Over 275 to 309 (YRMKKKDEGSYSLEEPKQANGGAYQKPTKQEEFYA) the chain is Cytoplasmic. Residues 283–309 (GSYSLEEPKQANGGAYQKPTKQEEFYA) are disordered. Ser284 is subject to Phosphoserine.

The protein belongs to the syndecan proteoglycan family. As to quaternary structure, interacts with CDCP1. Interacts (via C-terminus) with TIAM1 (via PDZ domain). Interacts with MDK. Shedding is enhanced by a number of factors such as heparanase, thrombin or EGF. Also by stress and wound healing. PMA-mediated shedding is inhibited by TIMP3.

The protein resides in the membrane. Its subcellular location is the secreted. The protein localises to the extracellular exosome. In terms of biological role, cell surface proteoglycan that contains both heparan sulfate and chondroitin sulfate and that links the cytoskeleton to the interstitial matrix. Regulates exosome biogenesis in concert with SDCBP and PDCD6IP. Able to induce its own expression in dental mesenchymal cells and also in the neighboring dental epithelial cells via an MSX1-mediated pathway. In Mesocricetus auratus (Golden hamster), this protein is Syndecan-1.